Reading from the N-terminus, the 241-residue chain is MSGHSKWASIKHSKGKADKQRSKVFSKLSKEISVAAKLGDKDPAMNPRLRSAIQAAKSANMPKDNIERAIAKSSVNSETNYENLRYEGFGPDKIAVIVEALTDNKNRTASNVRSIFVKSGGNLGTQGSASHNFNQLGIIKIDKKEISDEQIFELAIESGADECISNDEFHEIQCPMSEIYNVKKNLEKTIANFISTEIEWVPLNSVDVEKDKVEAALEFLETLEDDDDVQSVYSNINFKNN.

A disordered region spans residues 1–24 (MSGHSKWASIKHSKGKADKQRSKV).

It belongs to the TACO1 family.

Its subcellular location is the cytoplasm. The polypeptide is Probable transcriptional regulatory protein SAR11_0592 (Pelagibacter ubique (strain HTCC1062)).